The chain runs to 104 residues: Flagellar hook-basal body complex protein FliE (104 aa).

This sequence belongs to the FliE family.

It is found in the bacterial flagellum basal body. In Escherichia fergusonii (strain ATCC 35469 / DSM 13698 / CCUG 18766 / IAM 14443 / JCM 21226 / LMG 7866 / NBRC 102419 / NCTC 12128 / CDC 0568-73), this protein is Flagellar hook-basal body complex protein FliE.